The sequence spans 173 residues: Photosystem I assembly protein Ycf3 (173 aa).

TPR repeat units lie at residues 35–68 (AFVYYRDGMSAQADGEYAEALDNYEEALRLEENP), 72–105 (SYILYNMALIHASNGDHEKALGLYQEAIELNPKM), and 120–153 (GEKAKEAGQEDDAENLFDKAAEYWKQAIRLAPNN).

Belongs to the Ycf3 family.

The protein resides in the cellular thylakoid membrane. In terms of biological role, essential for the assembly of the photosystem I (PSI) complex. May act as a chaperone-like factor to guide the assembly of the PSI subunits. This Synechocystis sp. (strain ATCC 27184 / PCC 6803 / Kazusa) protein is Photosystem I assembly protein Ycf3.